A 353-amino-acid polypeptide reads, in one-letter code: Photosystem II protein D1 (353 aa).

An N-acetylthreonine modification is found at T2. T2 carries the phosphothreonine modification. 3 consecutive transmembrane segments (helical) span residues 29-46 (YIGWFGVLMIPTLLTATS), 118-133 (HFLLGVACYMGREWEL), and 142-156 (WIAVAYSAPVAAATA). Residue H118 participates in chlorophyll a binding. Position 126 (Y126) interacts with pheophytin a. D170 and E189 together coordinate [CaMn4O5] cluster. A helical membrane pass occupies residues 197–218 (FHMLGVAGVFGGSLFSAMHGSL). H198 contributes to the chlorophyll a binding site. Residues H215 and 264 to 265 (SF) each bind a quinone. H215 provides a ligand contact to Fe cation. H272 is a binding site for Fe cation. The helical transmembrane segment at 274 to 288 (FLAAWPVVGIWFTAL) threads the bilayer. Positions 332, 333, 342, and 344 each coordinate [CaMn4O5] cluster. A propeptide spanning residues 345 to 353 (AIEAPATNG) is cleaved from the precursor.

This sequence belongs to the reaction center PufL/M/PsbA/D family. In terms of assembly, PSII is composed of 1 copy each of membrane proteins PsbA, PsbB, PsbC, PsbD, PsbE, PsbF, PsbH, PsbI, PsbJ, PsbK, PsbL, PsbM, PsbT, PsbX, PsbY, PsbZ, Psb30/Ycf12, at least 3 peripheral proteins of the oxygen-evolving complex and a large number of cofactors. It forms dimeric complexes. The cofactor is The D1/D2 heterodimer binds P680, chlorophylls that are the primary electron donor of PSII, and subsequent electron acceptors. It shares a non-heme iron and each subunit binds pheophytin, quinone, additional chlorophylls, carotenoids and lipids. D1 provides most of the ligands for the Mn4-Ca-O5 cluster of the oxygen-evolving complex (OEC). There is also a Cl(-1) ion associated with D1 and D2, which is required for oxygen evolution. The PSII complex binds additional chlorophylls, carotenoids and specific lipids.. Post-translationally, tyr-161 forms a radical intermediate that is referred to as redox-active TyrZ, YZ or Y-Z. C-terminally processed by CTPA; processing is essential to allow assembly of the oxygen-evolving complex and thus photosynthetic growth.

The protein localises to the plastid membrane. It carries out the reaction 2 a plastoquinone + 4 hnu + 2 H2O = 2 a plastoquinol + O2. Photosystem II (PSII) is a light-driven water:plastoquinone oxidoreductase that uses light energy to abstract electrons from H(2)O, generating O(2) and a proton gradient subsequently used for ATP formation. It consists of a core antenna complex that captures photons, and an electron transfer chain that converts photonic excitation into a charge separation. The D1/D2 (PsbA/PsbD) reaction center heterodimer binds P680, the primary electron donor of PSII as well as several subsequent electron acceptors. The polypeptide is Photosystem II protein D1 (Cuscuta exaltata (Tall dodder)).